The sequence spans 455 residues: Ribulose bisphosphate carboxylase large chain (455 aa).

K5 is modified (N6,N6,N6-trimethyllysine). Residues N114 and T164 each contribute to the substrate site. K166 functions as the Proton acceptor in the catalytic mechanism. K168 serves as a coordination point for substrate. Residues K192, D194, and E195 each contribute to the Mg(2+) site. K192 is modified (N6-carboxylysine). Residue H285 is the Proton acceptor of the active site. Substrate is bound by residues R286, H318, and S370.

It belongs to the RuBisCO large chain family. Type I subfamily. In terms of assembly, heterohexadecamer of 8 large chains and 8 small chains; disulfide-linked. The disulfide link is formed within the large subunit homodimers. Mg(2+) serves as cofactor. Post-translationally, the disulfide bond which can form in the large chain dimeric partners within the hexadecamer appears to be associated with oxidative stress and protein turnover.

It is found in the plastid. The protein resides in the chloroplast. It carries out the reaction 2 (2R)-3-phosphoglycerate + 2 H(+) = D-ribulose 1,5-bisphosphate + CO2 + H2O. The enzyme catalyses D-ribulose 1,5-bisphosphate + O2 = 2-phosphoglycolate + (2R)-3-phosphoglycerate + 2 H(+). Its function is as follows. RuBisCO catalyzes two reactions: the carboxylation of D-ribulose 1,5-bisphosphate, the primary event in carbon dioxide fixation, as well as the oxidative fragmentation of the pentose substrate in the photorespiration process. Both reactions occur simultaneously and in competition at the same active site. In Lupinus nanus (Sky lupine), this protein is Ribulose bisphosphate carboxylase large chain.